The sequence spans 410 residues: Arginine deiminase (410 aa).

Catalysis depends on Cys399, which acts as the Amidino-cysteine intermediate.

It belongs to the arginine deiminase family.

It is found in the cytoplasm. It carries out the reaction L-arginine + H2O = L-citrulline + NH4(+). Its pathway is amino-acid degradation; L-arginine degradation via ADI pathway; carbamoyl phosphate from L-arginine: step 1/2. The protein is Arginine deiminase of Listeria monocytogenes serotype 4a (strain HCC23).